We begin with the raw amino-acid sequence, 456 residues long: Equilibrative nucleoside transporter 2 (456 aa).

A helical membrane pass occupies residues 13 to 33 (LVGISFFILGLGTLLPWNFFI). The N-linked (GlcNAc...) asparagine glycan is linked to N56. A run of 5 helical transmembrane segments spans residues 69–89 (WVTL…SFLY), 98–118 (ILGS…LVKV), 123–143 (GLFF…CAVL), 161–181 (LFLS…LMSL), and 192–212 (LGYF…YLSL). Positions 248–277 (GVPISPQQASPTLDLDPEKEPEPEEPQKPG) are disordered. The residue at position 252 (S252) is a Phosphoserine. A compositionally biased stretch (basic and acidic residues) spans 263–275 (DPEKEPEPEEPQK). Transmembrane regions (helical) follow at residues 288–308 (IWLT…VFPA), 323–343 (WGLF…DWLG), 360–380 (LLPL…LCHV), 396–416 (FITF…LTMC), and 432–452 (ALMT…SFLF).

Belongs to the SLC29A/ENT transporter (TC 2.A.57) family.

The protein resides in the apical cell membrane. It is found in the basolateral cell membrane. It localises to the nucleus membrane. It carries out the reaction inosine(in) = inosine(out). The catalysed reaction is adenosine(in) = adenosine(out). It catalyses the reaction uridine(out) = uridine(in). The enzyme catalyses thymidine(in) = thymidine(out). It carries out the reaction hypoxanthine(out) = hypoxanthine(in). The catalysed reaction is adenine(out) = adenine(in). It catalyses the reaction cytidine(in) = cytidine(out). The enzyme catalyses thymine(out) = thymine(in). It carries out the reaction uracil(in) = uracil(out). The catalysed reaction is guanine(out) = guanine(in). It catalyses the reaction guanosine(in) = guanosine(out). In terms of biological role, bidirectional uniporter involved in the facilitative transport of nucleosides and nucleobases, and contributes to maintaining their cellular homeostasis. Functions as a Na(+)-independent, passive transporter. Involved in the transport of nucleosides such as inosine, adenosine, uridine, thymidine, cytidine and guanosine. Also able to transport purine nucleobases (hypoxanthine, adenine, guanine) and pyrimidine nucleobases (thymine, uracil). Involved in nucleoside transport at basolateral membrane of kidney cells, allowing liver absorption of nucleoside metabolites. Mediates apical nucleoside uptake into Sertoli cells, thereby regulating the transport of nucleosides in testis across the blood-testis-barrier. Mediates both the influx and efflux of hypoxanthine in skeletal muscle microvascular endothelial cells to control the amount of intracellular hypoxanthine available for xanthine oxidase-mediated ROS production. This Mus musculus (Mouse) protein is Equilibrative nucleoside transporter 2.